The chain runs to 427 residues: 3-phosphoshikimate 1-carboxyvinyltransferase (427 aa).

3-phosphoshikimate-binding residues include Lys-22, Ser-23, and Arg-27. Lys-22 contacts phosphoenolpyruvate. Residues Gly-96 and Arg-124 each coordinate phosphoenolpyruvate. Residues Ser-169, Ser-170, Gln-171, Ser-197, Asp-313, Asn-336, and Lys-340 each contribute to the 3-phosphoshikimate site. Residue Gln-171 participates in phosphoenolpyruvate binding. Asp-313 functions as the Proton acceptor in the catalytic mechanism. Positions 344, 386, and 411 each coordinate phosphoenolpyruvate.

This sequence belongs to the EPSP synthase family. As to quaternary structure, monomer.

The protein resides in the cytoplasm. It carries out the reaction 3-phosphoshikimate + phosphoenolpyruvate = 5-O-(1-carboxyvinyl)-3-phosphoshikimate + phosphate. It participates in metabolic intermediate biosynthesis; chorismate biosynthesis; chorismate from D-erythrose 4-phosphate and phosphoenolpyruvate: step 6/7. Functionally, catalyzes the transfer of the enolpyruvyl moiety of phosphoenolpyruvate (PEP) to the 5-hydroxyl of shikimate-3-phosphate (S3P) to produce enolpyruvyl shikimate-3-phosphate and inorganic phosphate. The sequence is that of 3-phosphoshikimate 1-carboxyvinyltransferase from Salmonella dublin (strain CT_02021853).